A 782-amino-acid polypeptide reads, in one-letter code: DnaJ homolog subfamily C member 16 (782 aa).

Positions 1 to 25 are cleaved as a signal peptide; the sequence is MEVRKLSISWQFLIVLVLILQILSA. Residues 26–535 lie on the Cytoplasmic side of the membrane; it reads LDFDPYRVLG…DSIFHNNWRE (510 aa). The region spanning 29–93 is the J domain; sequence DPYRVLGVSR…EKRSNYDQYG (65 aa). The Thioredoxin domain occupies 119–247; it reads FYFDESFFHF…LRQFVESLLP (129 aa). A helical; Anchor for type IV membrane protein transmembrane segment spans residues 536 to 556; sequence MMPLLSLIFSALFILFGTVIV. Residues 557-782 are Extracellular-facing; that stretch reads QAFSDSNDER…FYIPSWPELD (226 aa). A disordered region spans residues 562–593; that stretch reads SNDERESSPPEKEEAQEKTGKTEPSFTKENSS. Basic and acidic residues predominate over residues 563-582; sequence NDERESSPPEKEEAQEKTGK. Polar residues predominate over residues 583-593; that stretch reads TEPSFTKENSS. An N-linked (GlcNAc...) asparagine glycan is attached at N631.

The protein resides in the endoplasmic reticulum membrane. In terms of biological role, plays an important role in regulating the size of autophagosomes during the formation process. This is DnaJ homolog subfamily C member 16 (DNAJC16) from Homo sapiens (Human).